The sequence spans 176 residues: Interleukin-1 receptor antagonist protein (176 aa).

Positions 1-25 (METCRCPLSYLISFLLFLSHSETAC) are cleaved as a signal peptide. A disulfide bridge links C91 with C141. N-linked (GlcNAc...) asparagine glycosylation occurs at N109.

It belongs to the IL-1 family.

It is found in the secreted. Its function is as follows. Anti-inflammatory antagonist of interleukin-1 family of proinflammatory cytokines such as interleukin-1beta/IL1B and interleukin-1alpha/IL1A. Protects from immune dysregulation and uncontrolled systemic inflammation triggered by IL1 for a range of innate stimulatory agents such as pathogens. This Canis lupus familiaris (Dog) protein is Interleukin-1 receptor antagonist protein (IL1RN).